Consider the following 597-residue polypeptide: Nuclear receptor subfamily 4 group A member 1 (597 aa).

Residues 1–22 form a disordered region; it reads MPCIQAQYGTPATSPGPRDHLT. Residues 170–465 are required for nuclear import; the sequence is RVWTEQLPKA…PGEGKLIFCS (296 aa). The nuclear receptor DNA-binding region spans 263-338; it reads EGRCAVCGDN…VGMVKEVVRT (76 aa). NR C4-type zinc fingers lie at residues 266-286 and 302-326; these read CAVC…CEGC and CLAN…FQKC. Residues 267–353 form a required for binding NBRE-containing DNA region; it reads AVCGDNASCQ…RRGRLPSKPK (87 aa). The tract at residues 298–360 is required for the interaction with RXRA; sequence AKYICLANKD…KPKQPPDASP (63 aa). Residue Ser-340 is modified to Phosphoserine; by PKA. A disordered region spans residues 341 to 360; sequence LKGRRGRLPSKPKQPPDASP. A Phosphoserine; by PKA, RPS6KA1 and RPS6KA3 modification is found at Ser-350. The NR LBD domain maps to 359–594; that stretch reads SPTNLLTSLI…PIVDKIFMDT (236 aa). Positions 520–543 are binds lipopolysaccharide; that stretch reads PRRVEELQNRIASCLKEHMAAVAG. The AF-2 stretch occupies residues 583–594; that stretch reads PPPIVDKIFMDT.

It belongs to the nuclear hormone receptor family. NR4 subfamily. Binds the NGFI-B response element (NBRE) as a monomer. Binds the Nur response element (NurRE), consisting of two inverse NBRE-related octanucleotide repeats separated by 6 base-pairs, as a dimer. Interacts (via N-terminus) with NLRP3 (via LRR repeat domain); the interaction is direct, requires binding of NR4A1/Nur77 to NBRE-containing dsDNA and lipopolysaccharide, and leads to non-canonical NLRP3 inflammasome activation. Interacts with GADD45GIP1. Interacts with STK11. Interacts with IFI27. Heterodimer (via DNA-binding domain) with RXRA (via C-terminus); DNA-binding of the heterodimer is enhanced by 9-cis retinoic acid. Competes for the RXRA interaction with EP300 and thereby attenuates EP300 mediated acetylation of RXRA. Interacts with NCOA1. Interacts with NCOA2. Interacts with NCOA3. The cofactor is Zn(2+). Phosphorylated at Ser-350 by RPS6KA1 and RPS6KA3 in response to mitogenic or stress stimuli. Phosphorylation of Ser-350 results in decrease in NBRE binding while phosphorylation of Ser-340 has little effect on it. Post-translationally, acetylated by p300/CBP, acetylation increases stability. Deacetylated by HDAC1. Expressed in lung, brain and superior cervical ganglia. High levels are seen in the adrenal tissue.

The protein resides in the nucleus. It localises to the cytoplasm. The protein localises to the cytosol. It is found in the mitochondrion. Functionally, orphan nuclear receptor. Binds the NGFI-B response element (NBRE) 5'-AAAGGTCA-3'. Binds 9-cis-retinoic acid outside of its ligand-binding (NR LBD) domain. Participates in energy homeostasis by sequestrating the kinase STK11 in the nucleus, thereby attenuating cytoplasmic AMPK activation. Regulates the inflammatory response in macrophages by regulating metabolic adaptations during inflammation, including repressing the transcription of genes involved in the citric acid cycle (TCA). Inhibits NF-kappa-B signaling by binding to low-affinity NF-kappa-B binding sites, such as at the IL2 promoter. May act concomitantly with NR4A2 in regulating the expression of delayed-early genes during liver regeneration. Plays a role in the vascular response to injury. In the cytosol, upon its detection of both bacterial lipopolysaccharide (LPS) and NBRE-containing mitochondrial DNA released by GSDMD pores during pyroptosis, it promotes non-canonical NLRP3 inflammasome activation by stimulating association of NLRP3 and NEK7. The chain is Nuclear receptor subfamily 4 group A member 1 (Nr4a1) from Rattus norvegicus (Rat).